The following is a 347-amino-acid chain: Inosamine-phosphate amidinotransferase 1 (347 aa).

Catalysis depends on residues Asp179 and His227. Cys332 (amidino-cysteine intermediate) is an active-site residue.

This sequence belongs to the amidinotransferase family. In terms of assembly, homodimer.

It carries out the reaction 1-amino-1-deoxy-scyllo-inositol 4-phosphate + L-arginine = 1-guanidino-1-deoxy-scyllo-inositol 4-phosphate + L-ornithine. It functions in the pathway antibiotic biosynthesis; streptomycin biosynthesis. Functionally, catalyzes two non-consecutive transamidination reactions. It converts scyllo-inosamine 4-phosphate into N-amidino-scyllo-inosamine 4-phosphate and N1-amidinostreptamine 6-phosphate into streptidine 6-phosphate. The protein is Inosamine-phosphate amidinotransferase 1 (strB1) of Streptomyces griseus.